The primary structure comprises 600 residues: Sodium- and chloride-dependent betaine transporter (600 aa).

Residues 1 to 31 (MGTSEHVPLPTDEAKAKELEQSQHSEEPDRG) are disordered. Residues 1–38 (MGTSEHVPLPTDEAKAKELEQSQHSEEPDRGQWTGKFD) are Cytoplasmic-facing. Residues 12-30 (DEAKAKELEQSQHSEEPDR) are compositionally biased toward basic and acidic residues. The next 3 membrane-spanning stretches (helical) occupy residues 39-59 (FLMSMVAYAVGLGNVWRFPYL), 68-88 (FLVVYMIFFCLAAVPIFLMEV), and 116-136 (VVIAFMCIAYFCVIVAWAMFY). Over 137 to 207 (MISSIAWVFP…DTGDISEFGG (71 aa)) the chain is Extracellular. Asn-165 carries N-linked (GlcNAc...) asparagine glycosylation. Transmembrane regions (helical) follow at residues 208-228 (IQWELFFIMAAAWLIVYFALW) and 237-257 (FVYFCALFPYVLIFILLIRGL). Asn-273 carries an N-linked (GlcNAc...) asparagine glycan. A run of 7 helical transmembrane segments spans residues 286–306 (AGTQVFYSYGVGFGALIALGS), 321–341 (MCFINGCTSITAGFAVFSILG), 378–398 (VFAVLFFLMITILGLDSQVCM), 420–440 (SLGIFCLFFFCIGIPMVTHSG), 454–474 (GYALLFVVFFEVVGLAYGFGA), 499–519 (FCAPATSLVLFVFCVVYYHPV), and 536–556 (WFLSSCSMVVIPGYAIYYLFF). The Cytoplasmic portion of the chain corresponds to 557 to 600 (TNKHLTLKERVRKGLNLDGSFESPAKKNLVNNAEELKFIESSSQ).

It belongs to the sodium:neurotransmitter symporter (SNF) family. As to expression, highly expressed in the head, the excretory canal, tail hypodermal cells, epidermis and vulval epithelial cells. Expressed in the excretory canal-associated neuron and in some non-amphidial sensory neurons in the head (at protein level).

It is found in the cell membrane. In terms of biological role, betaine transporter dependent on Na(+) and Cl(-) ions that functions primarily in the epidermis to clear betaine from the extracellular space. Elicits current in response to betaine but not in response to GABA, L-carnitine, sarcosine, glycine or dimethylglycine. The chain is Sodium- and chloride-dependent betaine transporter from Caenorhabditis elegans.